Consider the following 1000-residue polypeptide: Lysine-specific histone demethylase 1 (1000 aa).

The tract at residues 104–123 is disordered; the sequence is RRPAGRRGRPALNTSNSLER. Positions 107-137 form a coiled coil; that stretch reads AGRRGRPALNTSNSLERNGTRYVSAEAPISV. The SWIRM domain maps to 153 to 249; that stretch reads CYESAIASNL…YGCIYIISSL (97 aa). Residues 260 to 302, Glu-301, and 328 to 329 each bind FAD; these read VAII…IYEA and LA. Residues 279-950 are demethylase activity; the sequence is LFAQYEQDFL…RCESQPIPED (672 aa). A coiled-coil region spans residues 434–529; the sequence is IGWYISIEAF…ADMLNSLAST (96 aa). The segment at 780–800 is disordered; the sequence is TYGTKRNAQQALGKEGERENK. Positions 841-921 form a DNA-binding region, HMG box; that stretch reads SRPSANPYLL…NYSTRLEEYQ (81 aa). 908 to 909 serves as a coordination point for FAD; that stretch reads AR. Residues 959–972 show a composition bias toward basic and acidic residues; it reads EQEDEHLHPEKEGM. The tract at residues 959–1000 is disordered; that stretch reads EQEDEHLHPEKEGMSVENSDDDYHDDLDYEDSISEVFPDNFS. Acidic residues predominate over residues 976–991; that stretch reads NSDDDYHDDLDYEDSI.

It belongs to the flavin monoamine oxidase family. Component of the SWM histone demethylase complex composed of at least lsd1, lsd2, phf1 and phf2. Interacts directly with lsd2. It depends on FAD as a cofactor.

The protein resides in the nucleus. In terms of biological role, catalytic component of the SWM histone demethylase complex that specifically demethylates H3K9me2, a specific tag for epigenetic transcriptional activation, thereby acting as a corepressor. Acts by oxidizing the substrate by FAD to generate the corresponding imine that is subsequently hydrolyzed. Has a role in regulating heterochromatin propagation and euchromatic transcription. Also has a gene activating role. The sequence is that of Lysine-specific histone demethylase 1 (lsd1) from Schizosaccharomyces pombe (strain 972 / ATCC 24843) (Fission yeast).